Reading from the N-terminus, the 97-residue chain is MAFFSSRVRALFILVLVLPLCSETGFARSKKTRKEPDCDVYRSHLFFCTREMDPICGTNGKSYANPCIFCSEKLGRNEKFDFGHWGHCREYTSAARS.

The signal sequence occupies residues 1–26; sequence MAFFSSRVRALFILVLVLPLCSETGF. The region spanning 32 to 90 is the Kazal-like domain; that stretch reads TRKEPDCDVYRSHLFFCTREMDPICGTNGKSYANPCIFCSEKLGRNEKFDFGHWGHCRE. Intrachain disulfides connect cysteine 38–cysteine 70, cysteine 48–cysteine 67, and cysteine 56–cysteine 88.

In terms of tissue distribution, seminal plasma.

The protein localises to the secreted. Its function is as follows. Inhibits acrosin. This chain is Sperm-associated acrosin inhibitor, found in Sus scrofa (Pig).